The sequence spans 526 residues: uncharacterized protein (526 aa).

2 WD repeats span residues 210-248 and 452-491; these read SMEQ…HHDT and SHNS…LIDS.

This is an uncharacterized protein from Acanthamoeba polyphaga mimivirus (APMV).